A 125-amino-acid chain; its full sequence is Barwin (125 aa).

Gln1 carries the pyrrolidone carboxylic acid modification. Residues 1-125 enclose the Barwin domain; sequence QQANDVRATY…VNYQFVDCRD (125 aa). Disulfide bonds link Cys31-Cys63, Cys52-Cys86, and Cys66-Cys123.

In terms of biological role, may be involved in a defense mechanism. Probable plant lectin. Binds weakly a chitin analog. This Hordeum vulgare (Barley) protein is Barwin.